Here is a 215-residue protein sequence, read N- to C-terminus: Pyrrolidone-carboxylate peptidase (215 aa).

Active-site residues include glutamate 80, cysteine 143, and histidine 167.

This sequence belongs to the peptidase C15 family. Homotetramer.

It is found in the cytoplasm. The catalysed reaction is Release of an N-terminal pyroglutamyl group from a polypeptide, the second amino acid generally not being Pro.. Functionally, removes 5-oxoproline from various penultimate amino acid residues except L-proline. This is Pyrrolidone-carboxylate peptidase from Bacillus cereus (strain G9842).